The following is a 573-amino-acid chain: DNA damage-binding protein CMR1 (573 aa).

Residues 27-94 (DSLNDSISRE…EMEKAEERKR (68 aa)) are disordered. Residues 72-152 (TMEDSEEDKQ…EEIKKEEDST (81 aa)) adopt a coiled-coil conformation. A compositionally biased stretch (basic and acidic residues) spans 79–94 (DKQMREEMEKAEERKR). WD repeat units lie at residues 218-259 (ITQQ…DDET), 268-308 (PHGK…STEV), 319-357 (DYPLGVSDINVADNNLLYMTTLSGNFYRYDMRSPFKQGE), 361-401 (LHDK…QKNS), 418-456 (HSRLSVSCVDWNHDNHLVCNGYDDTVNVFDLSGSDKLPL), 495-538 (GRWV…LCHL), and 542-573 (DRMTAVPAVSMLHPTENWCVGGSASGKVYLFE).

It belongs to the WD repeat DDB2/WDR76 family.

Functionally, DNA-binding protein that binds to both single- and double-stranded DNA. Binds preferentially to UV-damaged DNA. May be involved in DNA-metabolic processes. In Meyerozyma guilliermondii (strain ATCC 6260 / CBS 566 / DSM 6381 / JCM 1539 / NBRC 10279 / NRRL Y-324) (Yeast), this protein is DNA damage-binding protein CMR1.